Here is a 593-residue protein sequence, read N- to C-terminus: Ribonuclease Y (593 aa).

Residues 6 to 26 traverse the membrane as a helical segment; it reads ILLMYLIVGLLTALTVLIFVF. One can recognise a KH domain in the interval 218 to 278; that stretch reads DPIKVKKVTD…IKLEVAYNAL (61 aa). Residues 354 to 464 form the HD domain; it reads VLTHSIEAAQ…TKIADFLSAA (111 aa).

This sequence belongs to the RNase Y family.

It is found in the cell membrane. Endoribonuclease that initiates mRNA decay. The sequence is that of Ribonuclease Y from Mycoplasmoides gallisepticum (strain R(low / passage 15 / clone 2)) (Mycoplasma gallisepticum).